The primary structure comprises 71 residues: Putative antitoxin VapB14 (71 aa).

In terms of biological role, putative antitoxin component of a possible type II toxin-antitoxin (TA) system. The cognate toxin is VapB14. This is Putative antitoxin VapB14 (vapB14) from Mycobacterium tuberculosis (strain ATCC 25618 / H37Rv).